The sequence spans 569 residues: Arginine--tRNA ligase (569 aa).

Positions 123–133 match the 'HIGH' region motif; it reads PNIAKRMHIGH.

The protein belongs to the class-I aminoacyl-tRNA synthetase family. In terms of assembly, monomer.

The protein localises to the cytoplasm. It carries out the reaction tRNA(Arg) + L-arginine + ATP = L-arginyl-tRNA(Arg) + AMP + diphosphate. The polypeptide is Arginine--tRNA ligase (Fusobacterium nucleatum subsp. nucleatum (strain ATCC 25586 / DSM 15643 / BCRC 10681 / CIP 101130 / JCM 8532 / KCTC 2640 / LMG 13131 / VPI 4355)).